The primary structure comprises 1004 residues: MAKQEQAPDRANDVFALTSFLYGGNADYIEELYAKYEDDPNSVDPQWRDFFAKLGDNADDVKKNAEGPSWTRKNWPIAANGELVSALDGNWAEVEKHVTDKLKGKAAKGEAKGAAGTPLTAEEITQAARDSVRAIMMIRAYRMRGHLHANLDPLGLAEKPNDYNELEPENYGFTPADYNRKIFIDNVLGLEYATVPEMLDILKRTYCGAIGVEFMHISDPAEKAWIQERIEGPDKKVAFTPEGKKAILSKLIEAEGFEQFIDVKYKGTKRFGLDGGESLIPALEQIVKRGGQMGLKEVVLGMAHRGRLNVLSQVMGKPHRAIFHEFKGGSYTPDDVEGSGDVKYHLGASSDREFDGNKVHLSLTANPSHLEIVNPVVMGKARAKQDLLVGRTRDDMVPLSERPKVLPLLLHGDAAFAGQGVVAECLGLSGLKGHRVAGTLHFIINNQIGFTTNPAFSRSSPYPSDVAKMIEAPIFHVNGDDPEAVVFAAKVATEFRMTFHKPVVIDMFCYRRFGHNEGDEPSFTQPLMYKAIRAHKTTVQLYGEKLIAEGLVTQDDIDRMKADWRQKLEGEFEAGQSYKPNKADWLDGAWAGLRTADNADEQRRGKTAVPVKTLKEIGKKLVEVPKDFHVHRTIQRFLDNRAKMMETGEGIDWATAESLAFGSLAVEGHPIRLSGQDVERGTFSQRHTVLYDQENQNRYIPLNNLQKGQAIYEAINSMLSEEAVLGYEYGYSLSDPRALVLWEAQFGDFANGAQVVFDQFISSGERKWLRMSGLVCLLPHGFEGQGPEHSSARLERYLQLCAEDNMQVANVTTPANYFHILRRQMKRDFRKPLIMMTPKSLLRHKRAISTLAELSGESSFHRLLWDDAQYNKDEGIKLQKDAKIRRVVLCSGKVYYDLYEEREKRGIDDVYLLRVEQLYPFPAKALINELSRFRHAEMVWCQEEPKNMGAWSFIDPYLEWVLAHIDAKHQRVRYAGRPAAASPATGLMSKHLAQLAAFLEDALG.

The protein belongs to the alpha-ketoglutarate dehydrogenase family. Homodimer. Part of the 2-oxoglutarate dehydrogenase (OGDH) complex composed of E1 (2-oxoglutarate dehydrogenase), E2 (dihydrolipoamide succinyltransferase) and E3 (dihydrolipoamide dehydrogenase); the complex contains multiple copies of the three enzymatic components (E1, E2 and E3). It depends on thiamine diphosphate as a cofactor.

It carries out the reaction N(6)-[(R)-lipoyl]-L-lysyl-[protein] + 2-oxoglutarate + H(+) = N(6)-[(R)-S(8)-succinyldihydrolipoyl]-L-lysyl-[protein] + CO2. Functionally, E1 component of the 2-oxoglutarate dehydrogenase (OGDH) complex which catalyzes the decarboxylation of 2-oxoglutarate, the first step in the conversion of 2-oxoglutarate to succinyl-CoA and CO(2). This is 2-oxoglutarate dehydrogenase E1 component from Brucella suis (strain ATCC 23445 / NCTC 10510).